The primary structure comprises 329 residues: uncharacterized protein (329 aa).

A coiled-coil region spans residues 56-247; the sequence is LNKEEQFQED…EAEKTHQAKL (192 aa).

This is an uncharacterized protein from Bos taurus (Bovine).